The following is a 346-amino-acid chain: Phosphate-binding protein PstS (346 aa).

Positions 1–25 (MKVMRTTVATVVAATLSMSAFSVFA) are cleaved as a signal peptide. Phosphate-binding positions include 34–36 (ATF), Ser-63, Asp-81, and 164–166 (SGT).

The protein belongs to the PstS family. In terms of assembly, the complex is composed of two ATP-binding proteins (PstB), two transmembrane proteins (PstC and PstA) and a solute-binding protein (PstS).

It is found in the periplasm. Functionally, part of the ABC transporter complex PstSACB involved in phosphate import. This Escherichia coli (strain K12) protein is Phosphate-binding protein PstS (pstS).